The chain runs to 304 residues: Ribosomal RNA small subunit methyltransferase H (304 aa).

Residues A37–H39, D57, F79, D100, and H107 contribute to the S-adenosyl-L-methionine site.

Belongs to the methyltransferase superfamily. RsmH family.

It localises to the cytoplasm. It carries out the reaction cytidine(1402) in 16S rRNA + S-adenosyl-L-methionine = N(4)-methylcytidine(1402) in 16S rRNA + S-adenosyl-L-homocysteine + H(+). Functionally, specifically methylates the N4 position of cytidine in position 1402 (C1402) of 16S rRNA. In Bacteroides thetaiotaomicron (strain ATCC 29148 / DSM 2079 / JCM 5827 / CCUG 10774 / NCTC 10582 / VPI-5482 / E50), this protein is Ribosomal RNA small subunit methyltransferase H.